Here is a 153-residue protein sequence, read N- to C-terminus: Aspartate carbamoyltransferase regulatory chain (153 aa).

Zn(2+) contacts are provided by Cys110, Cys115, Cys138, and Cys141.

It belongs to the PyrI family. Contains catalytic and regulatory chains. The cofactor is Zn(2+).

In terms of biological role, involved in allosteric regulation of aspartate carbamoyltransferase. The protein is Aspartate carbamoyltransferase regulatory chain of Bacteroides thetaiotaomicron (strain ATCC 29148 / DSM 2079 / JCM 5827 / CCUG 10774 / NCTC 10582 / VPI-5482 / E50).